The following is a 510-amino-acid chain: 2,3-bisphosphoglycerate-independent phosphoglycerate mutase (510 aa).

Residues Asp13 and Ser63 each coordinate Mn(2+). Ser63 serves as the catalytic Phosphoserine intermediate. Residues His124, 154-155 (RD), Arg186, Arg192, 262-265 (RADR), and Lys334 contribute to the substrate site. Mn(2+) contacts are provided by Asp401, His405, Asp442, His443, and His461.

Belongs to the BPG-independent phosphoglycerate mutase family. Monomer. The cofactor is Mn(2+).

The enzyme catalyses (2R)-2-phosphoglycerate = (2R)-3-phosphoglycerate. It functions in the pathway carbohydrate degradation; glycolysis; pyruvate from D-glyceraldehyde 3-phosphate: step 3/5. In terms of biological role, catalyzes the interconversion of 2-phosphoglycerate and 3-phosphoglycerate. The sequence is that of 2,3-bisphosphoglycerate-independent phosphoglycerate mutase from Vibrio campbellii (strain ATCC BAA-1116).